We begin with the raw amino-acid sequence, 309 residues long: E3 ubiquitin-protein ligase SINAT5 (309 aa).

An RING-type zinc finger spans residues 46-82 (CPVCTNSMYPPIHQCHNGHTLCSTCKSRVHNRCPTCR). The interval 96–289 (VAESLELPCK…KELKLRVTGR (194 aa)) is SBD. The SIAH-type zinc finger occupies 99–159 (SLELPCKYYN…LVAHLRDDHK (61 aa)). Zn(2+) is bound by residues Cys104, Cys111, His123, Cys127, Cys134, Cys141, His153, and His158.

The protein belongs to the SINA (Seven in absentia) family. In terms of assembly, homodimer; homodimerization is essential for its function. Interacts with UBC28 and NAC021/NAC022. Interacts with SINAT6. Interacts with ATG6 and TRAF1A. Interacts with WAV3. Interacts with FREE1. Expressed at low level in the vascular tissue of mature roots. Expressed in lateral roots and in elongation zone of the main root upon stimulation by auxin. Colocalizes with NAC021/NAC022.

The protein resides in the nucleus. The protein localises to the cytoplasm. The catalysed reaction is S-ubiquitinyl-[E2 ubiquitin-conjugating enzyme]-L-cysteine + [acceptor protein]-L-lysine = [E2 ubiquitin-conjugating enzyme]-L-cysteine + N(6)-ubiquitinyl-[acceptor protein]-L-lysine.. Its pathway is protein modification; protein ubiquitination. Its function is as follows. E3 ubiquitin-protein ligase that mediates ubiquitination and subsequent proteasomal degradation of target proteins. E3 ubiquitin ligases accept ubiquitin from an E2 ubiquitin-conjugating enzyme in the form of a thioester and then directly transfers the ubiquitin to targeted substrates. Mediates the ubiquitination and proteasomal-dependent degradation of NAC021/NAC022, a transcription activator that functions downstream of the auxin signals, thereby acting as a down-regulator of auxin signals. Involved in the formation of lateral roots. Is antagonist to SINAT1, SINAT2, SINAT3 and SINAT4 by suppressing FREE1 ubiquitination and degradation mediated by SINAT1, SINAT2, SINAT3 and SINAT4, and promoting FREE1 accumulation. This chain is E3 ubiquitin-protein ligase SINAT5, found in Arabidopsis thaliana (Mouse-ear cress).